Here is a 397-residue protein sequence, read N- to C-terminus: CCA-adding enzyme (397 aa).

ATP contacts are provided by Gly26 and Arg29. Gly26 and Arg29 together coordinate CTP. Mg(2+)-binding residues include Asp39 and Asp41. ATP is bound by residues Arg110, Asp153, Arg156, Arg159, and Arg162. CTP is bound by residues Arg110, Asp153, Arg156, Arg159, and Arg162.

This sequence belongs to the tRNA nucleotidyltransferase/poly(A) polymerase family. Bacterial CCA-adding enzyme type 3 subfamily. Homodimer. Mg(2+) serves as cofactor.

The catalysed reaction is a tRNA precursor + 2 CTP + ATP = a tRNA with a 3' CCA end + 3 diphosphate. It catalyses the reaction a tRNA with a 3' CCA end + 2 CTP + ATP = a tRNA with a 3' CCACCA end + 3 diphosphate. In terms of biological role, catalyzes the addition and repair of the essential 3'-terminal CCA sequence in tRNAs without using a nucleic acid template. Adds these three nucleotides in the order of C, C, and A to the tRNA nucleotide-73, using CTP and ATP as substrates and producing inorganic pyrophosphate. tRNA 3'-terminal CCA addition is required both for tRNA processing and repair. Also involved in tRNA surveillance by mediating tandem CCA addition to generate a CCACCA at the 3' terminus of unstable tRNAs. While stable tRNAs receive only 3'-terminal CCA, unstable tRNAs are marked with CCACCA and rapidly degraded. The protein is CCA-adding enzyme of Bacillus cereus (strain B4264).